The sequence spans 286 residues: 2-hydroxy-6-oxo-6-phenylhexa-2,4-dienoate hydrolase (286 aa).

Substrate-binding positions include 42 to 43 (GG), Asn51, Lys111, Ser180, and Arg190. Residues 173-271 (NVFLFDQSLI…RCVHWAQWEH (99 aa)) form the AB hydrolase-1 domain. Catalysis depends on His265, which acts as the Proton acceptor. A substrate-binding site is contributed by Trp266.

This sequence belongs to the AB hydrolase superfamily. BphD family. Homodimer.

It carries out the reaction 2,6-dioxo-6-phenylhexa-3-enoate + H2O = 2-oxopent-4-enoate + benzoate + H(+). Its pathway is xenobiotic degradation; biphenyl degradation; 2-hydroxy-2,4-pentadienoate and benzoate from biphenyl: step 4/4. Its function is as follows. Catalyzes an unusual C-C bond hydrolysis of 2-hydroxy-6-oxo-6-phenylhexa-2,4-dienoic acid (HOPDA) to produce benzoic acid and 2-hydroxy-2,4-pentadienoic acid (HPD). This chain is 2-hydroxy-6-oxo-6-phenylhexa-2,4-dienoate hydrolase, found in Delftia acidovorans (Pseudomonas acidovorans).